Consider the following 605-residue polypeptide: MATDNARPRSRSLRRKSMGAEAALRDGAAQPAAAHKTKVIARSETGDDADEDAGADRDPGTRRGIDPWKLEPANDPFASNKEYGGKWGANGPADSAAKVLAAAWDIMALVDAEEVAKEQETFEAKTSPVSPFGAWPGGQSWRTLGDYSHAPILYPSAEVIEADALKVGAYVSRVVQCSRFVADKKAQRPTVRSLQSFLEAAFWRVMQNAYSTCLRLRPKLTAVSRSRRSGANWRKPSPSDPNWYAVSNQFLWRGMRVPSLLLPPDVPIEENAERGPTAAVFRNAGPALFIWPWARAPLDERDKRLVRAALWALDILDAAILASFPYAWRPHVGDKQFEEALDCLAEYFGLAVLLTETVLAALLDHTLAFMKSLGAGNYDDFEEDRFADPGKNKYLMGVEGVSLTRLNSAGTALATVCANTYAALRCLPSVATSSLTANYSAETRRARKPTREDLFSLLQHEALFYTIWLQRMATHLDFCSNVLVESAKKGKQEFPIRRSALVRHMWLQKLLSPLVVPVSLRDFAAAKKEAVADAKIETYVKSVQSTNKDPKGTIRFIASDNVKTLMASYEKYNPILDEPMIASRAFDDVISGYGGRTAGGQNRGD.

The interval 1-75 (MATDNARPRS…DPWKLEPAND (75 aa)) is disordered. The segment covering 8–17 (PRSRSLRRKS) has biased composition (basic residues). Over residues 54–69 (GADRDPGTRRGIDPWK) the composition is skewed to basic and acidic residues.

This sequence belongs to the alphaherpesvirinae HHV-1 UL47 family. In terms of assembly, interacts with US3 kinase. Interacts with UL31 and UL34; these interactions seem important for efficient virion nuclear egress. Interacts with UL41/VHS. Phosphorylated by US3. This phosphorylation is required for proper nuclear localization.

The protein localises to the virion tegument. Its subcellular location is the host nucleus. It localises to the host cytoplasm. Tegument protein that can bind to various RNA transcripts. Plays a role in the attenuation of selective viral and cellular mRNA degradation by modulating the activity of host shutoff RNase UL41/VHS. Also plays a role in the primary envelopment of virions in the perinuclear space, probably by interacting with two nuclear egress proteins UL31 and UL34. This is Tegument protein UL47 homolog (sORF1) from Amazona oratrix (yellow-headed parrot).